The sequence spans 934 residues: 2-oxoglutarate dehydrogenase E1 component (934 aa).

Over residues 515 to 537 the composition is skewed to basic and acidic residues; the sequence is RAAQDKIDKSDKMDNPDMERPES. A disordered region spans residues 515 to 544; the sequence is RAAQDKIDKSDKMDNPDMERPESLQEPLQS.

Belongs to the alpha-ketoglutarate dehydrogenase family. In terms of assembly, homodimer. Part of the 2-oxoglutarate dehydrogenase (OGDH) complex composed of E1 (2-oxoglutarate dehydrogenase), E2 (dihydrolipoamide succinyltransferase) and E3 (dihydrolipoamide dehydrogenase); the complex contains multiple copies of the three enzymatic components (E1, E2 and E3). Thiamine diphosphate is required as a cofactor.

It carries out the reaction N(6)-[(R)-lipoyl]-L-lysyl-[protein] + 2-oxoglutarate + H(+) = N(6)-[(R)-S(8)-succinyldihydrolipoyl]-L-lysyl-[protein] + CO2. E1 component of the 2-oxoglutarate dehydrogenase (OGDH) complex which catalyzes the decarboxylation of 2-oxoglutarate, the first step in the conversion of 2-oxoglutarate to succinyl-CoA and CO(2). In Staphylococcus haemolyticus (strain JCSC1435), this protein is 2-oxoglutarate dehydrogenase E1 component.